Reading from the N-terminus, the 141-residue chain is Putative pre-16S rRNA nuclease (141 aa).

This sequence belongs to the YqgF nuclease family.

It is found in the cytoplasm. Functionally, could be a nuclease involved in processing of the 5'-end of pre-16S rRNA. This is Putative pre-16S rRNA nuclease from Roseiflexus sp. (strain RS-1).